We begin with the raw amino-acid sequence, 79 residues long: RNA-binding protein Hfq (79 aa).

A Sm domain is found at 10 to 69; the sequence is DPFLNALRKEHVPVSIYLVNGIKLQGNIESFDQYVVLLRNTVTQMVYKHAISTVVPARPV.

It belongs to the Hfq family. In terms of assembly, homohexamer.

In terms of biological role, RNA chaperone that binds small regulatory RNA (sRNAs) and mRNAs to facilitate mRNA translational regulation in response to envelope stress, environmental stress and changes in metabolite concentrations. Also binds with high specificity to tRNAs. The protein is RNA-binding protein Hfq of Burkholderia cenocepacia (strain HI2424).